A 433-amino-acid chain; its full sequence is Homogentisate 1,2-dioxygenase (433 aa).

The active-site Proton acceptor is the His288. Fe cation-binding residues include His331 and Glu337. Homogentisate is bound by residues Tyr346 and His367. His367 contacts Fe cation.

This sequence belongs to the homogentisate dioxygenase family. Hexamer; dimer of trimers. The cofactor is Fe cation.

The enzyme catalyses homogentisate + O2 = 4-maleylacetoacetate + H(+). It participates in amino-acid degradation; L-phenylalanine degradation; acetoacetate and fumarate from L-phenylalanine: step 4/6. In terms of biological role, involved in the catabolism of homogentisate (2,5-dihydroxyphenylacetate or 2,5-OH-PhAc), a central intermediate in the degradation of phenylalanine and tyrosine. Catalyzes the oxidative ring cleavage of the ar omatic ring of 2,5-dihydroxyphenylacetate to yield maleylacetoacetate. The chain is Homogentisate 1,2-dioxygenase from Pseudomonas putida (strain ATCC 47054 / DSM 6125 / CFBP 8728 / NCIMB 11950 / KT2440).